A 166-amino-acid chain; its full sequence is Large ribosomal subunit protein bL9 (166 aa).

This sequence belongs to the bacterial ribosomal protein bL9 family.

Functionally, binds to the 23S rRNA. In Borrelia garinii subsp. bavariensis (strain ATCC BAA-2496 / DSM 23469 / PBi) (Borreliella bavariensis), this protein is Large ribosomal subunit protein bL9.